We begin with the raw amino-acid sequence, 451 residues long: Rab GDP-dissociation inhibitor (451 aa).

2 interaction with YPT1 regions span residues 106 to 112 and 234 to 259; these read RYVDFKQ and YPMYGLGELPQGFARLSAIYGGTYML.

This sequence belongs to the Rab GDI family. Interacts with the GDP-bound form of Rab GTPase YPT1. Interacts with YPT10.

It localises to the cytoplasm. In terms of biological role, regulates the GDP/GTP exchange reaction of SEC4 by inhibiting the dissociation of GDP from it, and the subsequent binding of GTP to SEC4. Plays an essential role in the yeast secretory pathway. Extracts GDP-bound YPT7 from vacuolar membranes, antagonizing vacuolar membrane fusion. The protein is Rab GDP-dissociation inhibitor (GDI1) of Saccharomyces cerevisiae (strain ATCC 204508 / S288c) (Baker's yeast).